The following is a 218-amino-acid chain: Trimethylamine corrinoid protein 2 (218 aa).

One can recognise a B12-binding N-terminal domain in the interval 1–92 (MAGKEEIIAK…EMEKRKSQTK (92 aa)). Residues 94-218 (LGTVIIGTIE…AKVKAALKVG (125 aa)) form the B12-binding domain. Position 107 (histidine 107) interacts with methylcob(III)alamin.

The protein belongs to the methylamine corrinoid protein family. As to quaternary structure, can form a complex with MttB.

It participates in one-carbon metabolism; methanogenesis from trimethylamine. Acts probably as a methyl group carrier between MttB and either MtbA or MtaA. This chain is Trimethylamine corrinoid protein 2 (mttC2), found in Methanosarcina mazei (strain ATCC BAA-159 / DSM 3647 / Goe1 / Go1 / JCM 11833 / OCM 88) (Methanosarcina frisia).